The sequence spans 872 residues: Rho guanine nucleotide exchange factor scd1 (872 aa).

Residues 1–29 (MAYFQDRKTSSRSLPSYINHSTQNLVGPR) form a disordered region. Positions 11–25 (SRSLPSYINHSTQNL) are enriched in polar residues. In terms of domain architecture, Calponin-homology (CH) spans 82-198 (DSIHREALNS…TIELLLKKYE (117 aa)). Residues 228 to 402 (SGRRVTAELY…VRVANQVNET (175 aa)) enclose the DH domain. The PH domain occupies 426-547 (SLQYFGQLLV…WMSVLNRLLW (122 aa)). Disordered regions lie at residues 553-667 (SPKD…STAS) and 743-765 (MKSD…STST). A compositionally biased stretch (polar residues) spans 560–584 (AASTPANPVYNRSSSQTSKGYNSSD). Ser-583 is subject to Phosphoserine. Low complexity predominate over residues 599–616 (SPTSISSPSSKSSPFTKT). Residues 617-633 (TSKDTKSATTTDERPSD) are compositionally biased toward basic and acidic residues. Low complexity-rich tracts occupy residues 645 to 667 (TSSL…STAS) and 748 to 765 (SLLP…STST). The PB1 domain occupies 772–859 (TTNVKIRLRL…FELMDPVHNK (88 aa)).

Scd1, scd2, cdc42, and ras1, in its GTP-bound state, act cooperatively to form a protein complex. Interacts with moe1 and cdc42.

The protein resides in the nucleus. Its subcellular location is the cytoplasm. Its function is as follows. Required for mating and morphogenesis. May contain a cryptic binding site for cdc42 that is enhanced by binding Ras. Interacts directly with scd2. Promotes the exchange of cdc42-bound GDP by GTP. Involved in septation and stimulates the elongation of conjugation tubes. This chain is Rho guanine nucleotide exchange factor scd1 (scd1), found in Schizosaccharomyces pombe (strain 972 / ATCC 24843) (Fission yeast).